The chain runs to 104 residues: Small ribosomal subunit protein bS6 (104 aa).

The protein belongs to the bacterial ribosomal protein bS6 family.

Functionally, binds together with bS18 to 16S ribosomal RNA. This is Small ribosomal subunit protein bS6 from Elusimicrobium minutum (strain Pei191).